Reading from the N-terminus, the 199-residue chain is Fe/S biogenesis protein NfuA (199 aa).

C151 and C154 together coordinate [4Fe-4S] cluster.

This sequence belongs to the NfuA family. Homodimer. [4Fe-4S] cluster serves as cofactor.

Involved in iron-sulfur cluster biogenesis. Binds a 4Fe-4S cluster, can transfer this cluster to apoproteins, and thereby intervenes in the maturation of Fe/S proteins. Could also act as a scaffold/chaperone for damaged Fe/S proteins. In Xanthomonas oryzae pv. oryzae (strain PXO99A), this protein is Fe/S biogenesis protein NfuA.